We begin with the raw amino-acid sequence, 156 residues long: Small ribosomal subunit protein uS7 (156 aa).

It belongs to the universal ribosomal protein uS7 family. As to quaternary structure, part of the 30S ribosomal subunit. Contacts proteins S9 and S11.

Its function is as follows. One of the primary rRNA binding proteins, it binds directly to 16S rRNA where it nucleates assembly of the head domain of the 30S subunit. Is located at the subunit interface close to the decoding center, probably blocks exit of the E-site tRNA. The polypeptide is Small ribosomal subunit protein uS7 (Chlorobaculum tepidum (strain ATCC 49652 / DSM 12025 / NBRC 103806 / TLS) (Chlorobium tepidum)).